A 273-amino-acid chain; its full sequence is Anthranilate synthase beta subunit 2, chloroplastic (273 aa).

The transit peptide at 1–47 (MATAARLLPKIQSPASPAVAEARRRRPSSLRLGVTSGPARTLKQKLV) directs the protein to the chloroplast. The interval 15–35 (ASPAVAEARRRRPSSLRLGVT) is disordered. The 200-residue stretch at 70–269 (PIIVIDNYDS…IKIIEGYEAL (200 aa)) folds into the Glutamine amidotransferase type-1 domain. 121 to 123 (GPG) is a binding site for L-glutamine. Cysteine 148 functions as the Nucleophile in the catalytic mechanism. L-glutamine is bound by residues glutamine 152 and 202-203 (SL). Active-site residues include histidine 243 and glutamate 245.

As to quaternary structure, heterotetramer consisting of two non-identical subunits: a beta subunit and a large alpha subunit. Expressed in roots and leaves.

It localises to the plastid. The protein resides in the chloroplast. The catalysed reaction is chorismate + L-glutamine = anthranilate + pyruvate + L-glutamate + H(+). It participates in amino-acid biosynthesis; L-tryptophan biosynthesis; L-tryptophan from chorismate: step 1/5. Functionally, part of a heterotetrameric complex that catalyzes the two-step biosynthesis of anthranilate, an intermediate in the biosynthesis of L-tryptophan. In the first step, the glutamine-binding beta subunit of anthranilate synthase (AS) provides the glutamine amidotransferase activity which generates ammonia as a substrate that, along with chorismate, is used in the second step, catalyzed by the large alpha subunit of AS to produce anthranilate. The sequence is that of Anthranilate synthase beta subunit 2, chloroplastic from Oryza sativa subsp. japonica (Rice).